The primary structure comprises 71 residues: Protein DP71L (71 aa).

Important for host CHOP inhibition regions lie at residues 16–18 (VRF) and 57–61 (LSTVL).

The protein belongs to the asfivirus DP71L family. As to quaternary structure, interacts (via C-terminus) with host PPP1CB.

Its function is as follows. Interacts with the host phosphatase PP1 catalytic subunit (PPP1CB) and recruits it to dephosphorylate EIF2S1/eIF2alpha and therefore restores the host translation that has been shut-down by the host. Also inhibits the EIF2S1/eIF2alpha-ATF4-DDIT3/CHOP pathway. The protein is Protein DP71L of African swine fever virus (strain Badajoz 1971 Vero-adapted) (Ba71V).